The following is a 139-amino-acid chain: Ribosomal RNA large subunit methyltransferase H (139 aa).

Residues Leu-56, Gly-88, and 107–112 (LSLMTF) each bind S-adenosyl-L-methionine.

The protein belongs to the RNA methyltransferase RlmH family. As to quaternary structure, homodimer.

The protein resides in the cytoplasm. The enzyme catalyses pseudouridine(1915) in 23S rRNA + S-adenosyl-L-methionine = N(3)-methylpseudouridine(1915) in 23S rRNA + S-adenosyl-L-homocysteine + H(+). Functionally, specifically methylates the pseudouridine at position 1915 (m3Psi1915) in 23S rRNA. This is Ribosomal RNA large subunit methyltransferase H from Coprothermobacter proteolyticus (strain ATCC 35245 / DSM 5265 / OCM 4 / BT).